Here is a 348-residue protein sequence, read N- to C-terminus: Mannonate dehydratase (348 aa).

This sequence belongs to the mannonate dehydratase family. Fe(2+) is required as a cofactor. Mn(2+) serves as cofactor.

It catalyses the reaction D-mannonate = 2-dehydro-3-deoxy-D-gluconate + H2O. It functions in the pathway carbohydrate metabolism; pentose and glucuronate interconversion. Its function is as follows. Catalyzes the dehydration of D-mannonate. The polypeptide is Mannonate dehydratase (Streptococcus agalactiae serotype Ia (strain ATCC 27591 / A909 / CDC SS700)).